Here is a 652-residue protein sequence, read N- to C-terminus: Protein phosphatase Slingshot homolog 3 (652 aa).

Residues 1–16 (MALVTVSRSPPASGHS) show a composition bias toward polar residues. The tract at residues 1-31 (MALVTVSRSPPASGHSTPVGPTDRVIRRRGR) is disordered. Ala-2 carries the N-acetylalanine modification. Ser-9, Ser-37, Ser-85, and Ser-87 each carry phosphoserine. Positions 43–91 (GAVLGLQDGGEGNDAAEADPEPMEKPSGEEQPAEDQTDNGQGSQSPWKQ) are disordered. The span at 80–90 (DNGQGSQSPWK) shows a compositional bias: polar residues. The DEK-C domain maps to 266–321 (EQMEQAILAELWQVLDASDLDSVTSKEIRQALELRLGCPLQQYRDFIDNQMLLLMA). One can recognise a Tyrosine-protein phosphatase domain in the interval 325–466 (RASRIFPHLY…LQTYQGILTA (142 aa)). Cys-410 serves as the catalytic Phosphocysteine intermediate. 3 disordered regions span residues 484–526 (EPLA…LGLR), 540–580 (LLEP…KGGQ), and 610–652 (RAFQ…EGKA). The span at 540 to 552 (LLEPSSEPESTTE) shows a compositional bias: low complexity. The span at 642–652 (SVDDSREEGKA) shows a compositional bias: basic and acidic residues.

Belongs to the protein-tyrosine phosphatase family. As to quaternary structure, does not bind to, or colocalize with, filamentous actin.

The protein resides in the cytoplasm. The protein localises to the cytoskeleton. Its subcellular location is the nucleus. It catalyses the reaction O-phospho-L-tyrosyl-[protein] + H2O = L-tyrosyl-[protein] + phosphate. It carries out the reaction O-phospho-L-seryl-[protein] + H2O = L-seryl-[protein] + phosphate. The catalysed reaction is O-phospho-L-threonyl-[protein] + H2O = L-threonyl-[protein] + phosphate. Protein phosphatase which may play a role in the regulation of actin filament dynamics. Can dephosphorylate and activate the actin binding/depolymerizing factor cofilin, which subsequently binds to actin filaments and stimulates their disassembly. The polypeptide is Protein phosphatase Slingshot homolog 3 (Ssh3) (Rattus norvegicus (Rat)).